The sequence spans 216 residues: MEKTVYSVEGVALRSVELDESVFGLSVNRGVIYYAINSELSNKRLGTACTKGRSEVHGSNTKPYKQKGTGRARRGDKKSPLLVGGGTIFGPKPRDFHYALPKKVKRLAMKSLLSLKAQGDALTVIEDFTVESGKTRDLIQVLRHFAQRERTVFILQNDDALLKRAGRNIPTLSFLSYNRLRAHDLFYGRKVLVLETAVHKIADFYRSKDAAQDGTY.

The tract at residues 51–78 (KGRSEVHGSNTKPYKQKGTGRARRGDKK) is disordered. The span at 64 to 76 (YKQKGTGRARRGD) shows a compositional bias: basic residues.

This sequence belongs to the universal ribosomal protein uL4 family. Part of the 50S ribosomal subunit.

One of the primary rRNA binding proteins, this protein initially binds near the 5'-end of the 23S rRNA. It is important during the early stages of 50S assembly. It makes multiple contacts with different domains of the 23S rRNA in the assembled 50S subunit and ribosome. Its function is as follows. Forms part of the polypeptide exit tunnel. The chain is Large ribosomal subunit protein uL4 from Treponema pallidum (strain Nichols).